We begin with the raw amino-acid sequence, 457 residues long: ERV-H1 provirus ancestral Env polyprotein (457 aa).

Residues 1-35 form the signal peptide; sequence MIFAGKAPSNTSTLMKFYSLILYSLLFSFPFLCHP. 2 N-linked (GlcNAc...) asparagine glycosylation sites follow: asparagine 10 and asparagine 47. The short motif at 64-67 is the CXXC element; the sequence is CWLC. N-linked (GlcNAc...) asparagine glycans are attached at residues asparagine 197, asparagine 222, asparagine 265, asparagine 283, asparagine 352, and asparagine 370. Residues 388-408 form a fusion peptide region; it reads VIPLIPLMFGLGLSASTIALS.

Belongs to the gamma type-C retroviral envelope protein family. HERV class-I H env subfamily. In terms of assembly, the surface (SU) and transmembrane (TM) proteins form a heterodimer. SU and TM are attached by noncovalent interactions or by a labile interchain disulfide bond. Post-translationally, specific enzymatic cleavages in vivo yield the mature SU and TM proteins. In terms of processing, the CXXC motif is highly conserved across a broad range of retroviral envelope proteins. It is thought to participate in the formation of a labile disulfide bond possibly with the CX6CC motif present in the transmembrane protein.

It is found in the virion. Functionally, retroviral envelope proteins mediate receptor recognition and membrane fusion during early infection. Endogenous envelope proteins may have kept, lost or modified their original function during evolution. In terms of biological role, SU mediates receptor recognition. TM anchors the envelope heterodimer to the viral membrane through one transmembrane domain. The other hydrophobic domain, called fusion peptide, mediates fusion of the viral membrane with the target cell membrane. The chain is ERV-H1 provirus ancestral Env polyprotein from Pan troglodytes (Chimpanzee).